A 1271-amino-acid polypeptide reads, in one-letter code: DNA-directed RNA polymerase subunit beta (1271 aa).

Belongs to the RNA polymerase beta chain family. The RNAP catalytic core consists of 2 alpha, 1 beta, 1 beta' and 1 omega subunit. When a sigma factor is associated with the core the holoenzyme is formed, which can initiate transcription.

It carries out the reaction RNA(n) + a ribonucleoside 5'-triphosphate = RNA(n+1) + diphosphate. In terms of biological role, DNA-dependent RNA polymerase catalyzes the transcription of DNA into RNA using the four ribonucleoside triphosphates as substrates. The polypeptide is DNA-directed RNA polymerase subunit beta (Acholeplasma laidlawii (strain PG-8A)).